Consider the following 105-residue polypeptide: Large ribosomal subunit protein bL21 (105 aa).

This sequence belongs to the bacterial ribosomal protein bL21 family. In terms of assembly, part of the 50S ribosomal subunit. Contacts protein L20.

In terms of biological role, this protein binds to 23S rRNA in the presence of protein L20. This Rhizobium etli (strain ATCC 51251 / DSM 11541 / JCM 21823 / NBRC 15573 / CFN 42) protein is Large ribosomal subunit protein bL21.